The primary structure comprises 785 residues: Conserved oligomeric Golgi complex subunit 4 (785 aa).

The disordered stretch occupies residues 1–24; it reads MADLDSPPKLSGVQQPSEGVGGGR. A2 is modified (N-acetylalanine). Positions 2–84 are interaction with SCFD1; the sequence is ADLDSPPKLS…VTLHRMGPNL (83 aa). S6 carries the post-translational modification Phosphoserine. Residues 85–153 form an interaction with STX5 region; sequence QLIEGDAKQL…TALRSEDYEQ (69 aa). Positions 618-740 are d domain; sequence PQVQPWINSF…SQMATILNLE (123 aa). An e domain; essential for proper cell surface glycosylation region spans residues 741 to 785; sequence RVTEILDYWGPNSGPLTWRLTPAEVRQVLALRIDFRSEDIKRLRL.

The protein belongs to the COG4 family. Monomer. Component of the conserved oligomeric Golgi (COG) complex which is composed of eight different subunits and is required for normal Golgi morphology and localization. Mediates interaction of SCFD1 with the COG complex. Interacts with STX5.

The protein resides in the cytoplasm. The protein localises to the cytosol. It is found in the golgi apparatus membrane. In terms of biological role, required for normal Golgi function. Plays a role in SNARE-pin assembly and Golgi-to-ER retrograde transport via its interaction with SCFD1. This Homo sapiens (Human) protein is Conserved oligomeric Golgi complex subunit 4 (COG4).